Here is a 443-residue protein sequence, read N- to C-terminus: Tol-Pal system protein TolB (443 aa).

The first 33 residues, 1–33 (MKIGIINTKIRTVFSAFACMIAASLVCTMPARA), serve as a signal peptide directing secretion.

The protein belongs to the TolB family. In terms of assembly, the Tol-Pal system is composed of five core proteins: the inner membrane proteins TolA, TolQ and TolR, the periplasmic protein TolB and the outer membrane protein Pal. They form a network linking the inner and outer membranes and the peptidoglycan layer.

Its subcellular location is the periplasm. Its function is as follows. Part of the Tol-Pal system, which plays a role in outer membrane invagination during cell division and is important for maintaining outer membrane integrity. The protein is Tol-Pal system protein TolB of Brucella melitensis biotype 1 (strain ATCC 23456 / CCUG 17765 / NCTC 10094 / 16M).